We begin with the raw amino-acid sequence, 151 residues long: Deoxyuridine 5'-triphosphate nucleotidohydrolase (151 aa).

Residues 70-72 (RSG), N83, 87-89 (LID), and M97 each bind substrate.

Belongs to the dUTPase family. It depends on Mg(2+) as a cofactor.

It carries out the reaction dUTP + H2O = dUMP + diphosphate + H(+). The protein operates within pyrimidine metabolism; dUMP biosynthesis; dUMP from dCTP (dUTP route): step 2/2. Functionally, this enzyme is involved in nucleotide metabolism: it produces dUMP, the immediate precursor of thymidine nucleotides and it decreases the intracellular concentration of dUTP so that uracil cannot be incorporated into DNA. This Pseudomonas fluorescens (strain Pf0-1) protein is Deoxyuridine 5'-triphosphate nucleotidohydrolase.